We begin with the raw amino-acid sequence, 352 residues long: Molybdenum import ATP-binding protein ModC (352 aa).

Positions 2-230 constitute an ABC transporter domain; it reads MLEINVKKRL…PLFEPWQEQG (229 aa). 32–39 lines the ATP pocket; the sequence is GISGSGKS. A Mop domain is found at 290-352; that stretch reads KTSIRNILSG…YAQIKAVSVM (63 aa).

It belongs to the ABC transporter superfamily. Molybdate importer (TC 3.A.1.8) family. In terms of assembly, the complex is composed of two ATP-binding proteins (ModC), two transmembrane proteins (ModB) and a solute-binding protein (ModA).

It is found in the cell inner membrane. The catalysed reaction is molybdate(out) + ATP + H2O = molybdate(in) + ADP + phosphate + H(+). Part of the ABC transporter complex ModABC involved in molybdenum import. Responsible for energy coupling to the transport system. The protein is Molybdenum import ATP-binding protein ModC of Mannheimia succiniciproducens (strain KCTC 0769BP / MBEL55E).